A 199-amino-acid polypeptide reads, in one-letter code: dTTP/UTP pyrophosphatase (199 aa).

Aspartate 73 acts as the Proton acceptor in catalysis.

The protein belongs to the Maf family. YhdE subfamily. The cofactor is a divalent metal cation.

Its subcellular location is the cytoplasm. The enzyme catalyses dTTP + H2O = dTMP + diphosphate + H(+). The catalysed reaction is UTP + H2O = UMP + diphosphate + H(+). In terms of biological role, nucleoside triphosphate pyrophosphatase that hydrolyzes dTTP and UTP. May have a dual role in cell division arrest and in preventing the incorporation of modified nucleotides into cellular nucleic acids. This Caldicellulosiruptor saccharolyticus (strain ATCC 43494 / DSM 8903 / Tp8T 6331) protein is dTTP/UTP pyrophosphatase.